The primary structure comprises 523 residues: DNA-directed RNA polymerase subunit Rpo2N (523 aa).

The interval 501–523 is disordered; the sequence is SSMGVEGIPGISMETTSTTSADD. Residues 513 to 523 are compositionally biased toward polar residues; sequence METTSTTSADD.

The protein belongs to the RNA polymerase beta chain family. In terms of assembly, part of the RNA polymerase complex.

It is found in the cytoplasm. It carries out the reaction RNA(n) + a ribonucleoside 5'-triphosphate = RNA(n+1) + diphosphate. In terms of biological role, DNA-dependent RNA polymerase (RNAP) catalyzes the transcription of DNA into RNA using the four ribonucleoside triphosphates as substrates. The Rpo2 subunit (Rpo2N and Rpo2C in this organism) is implicated in DNA promoter recognition and in nucleotide binding. The chain is DNA-directed RNA polymerase subunit Rpo2N from Halobacterium salinarum (strain ATCC 29341 / DSM 671 / R1).